Reading from the N-terminus, the 319-residue chain is Ornithine carbamoyltransferase (319 aa).

Carbamoyl phosphate contacts are provided by residues 63 to 66 (STRT), Gln90, Arg114, and 141 to 144 (HPCQ). L-ornithine contacts are provided by residues Asn172, Asp236, and 240–241 (SM). Carbamoyl phosphate contacts are provided by residues 276-277 (CL) and Arg304.

This sequence belongs to the aspartate/ornithine carbamoyltransferase superfamily. OTCase family.

The protein resides in the cytoplasm. It carries out the reaction carbamoyl phosphate + L-ornithine = L-citrulline + phosphate + H(+). It functions in the pathway amino-acid biosynthesis; L-arginine biosynthesis; L-arginine from L-ornithine and carbamoyl phosphate: step 1/3. Reversibly catalyzes the transfer of the carbamoyl group from carbamoyl phosphate (CP) to the N(epsilon) atom of ornithine (ORN) to produce L-citrulline. The sequence is that of Ornithine carbamoyltransferase from Halalkalibacterium halodurans (strain ATCC BAA-125 / DSM 18197 / FERM 7344 / JCM 9153 / C-125) (Bacillus halodurans).